Reading from the N-terminus, the 245-residue chain is PF03932 family protein CutC (245 aa).

This sequence belongs to the CutC family.

It localises to the cytoplasm. This Photobacterium profundum (strain SS9) protein is PF03932 family protein CutC.